Here is a 268-residue protein sequence, read N- to C-terminus: MKLKLFPFQAAGHGQVLVSEDDKILIKPCIKSEVDFYKTCNDNITLYNWIPKNFGEWMPSSRDIEGINPIAESVAFSLTGKAIILENILYQMETPCVMDIKLGKQLWADDAPLEKRKRLDAVSRSTTSGSLGFRITGILSWDRTNNTYIKRSTAWGKTLTDSDVVEGLNDFFVSCSLSQKARLVESFLNLLKLFEVDLSESYIELKSSSILFVYDYSSLNPTYHCESNVVLKLIDLAHSRWTKNTIDHNTLIGVKNLIHCFAMLLKNE.

Residues lysine 27, 86–88 (ENI), and aspartate 99 contribute to the ATP site. 127-135 (TSGSLGFRI) provides a ligand contact to substrate. Aspartate 235 is an ATP binding site.

This sequence belongs to the inositol phosphokinase (IPK) family.

The protein resides in the cytoplasm. The protein localises to the nucleus. It carries out the reaction 1D-myo-inositol 1,4,5-trisphosphate + 2 ATP = 1D-myo-inositol 1,3,4,5,6-pentakisphosphate + 2 ADP + 2 H(+). It catalyses the reaction 1D-myo-inositol 1,4,5-trisphosphate + ATP = 1D-myo-inositol 1,4,5,6-tetrakisphosphate + ADP + H(+). The catalysed reaction is 1D-myo-inositol 1,4,5-trisphosphate + ATP = 1D-myo-inositol 1,3,4,5-tetrakisphosphate + ADP + H(+). The enzyme catalyses 1D-myo-inositol 1,4,5,6-tetrakisphosphate + ATP = 1D-myo-inositol 1,3,4,5,6-pentakisphosphate + ADP + H(+). Inositol phosphate kinase with both monophosphoinositol and diphosphoinositol polyphosphate synthase activities. Able to phosphorylate inositol 1,4,5-trisphosphate (Ins(1,4,5)P3) on both the carbon-3 and carbon-6 positions to synthesize inositol 1,3,4,5-tetrakisphosphate (Ins(1,3,4,5)P4) and inositol 1,4,5,6-tetrakisphosphate (Ins(1,4,5,6)P4), and then to subsequently phosphorylate and convert either isomer of InsP4 to inositol 1,3,4,5,6-pentakisphosphate (Ins(1,3,4,5,6)P5). Also converts (Ins(1,3,4,5,6)P5) to InsP6. Also has a role in transcription regulation. The catalytic activity is required for PHO gene repression by phosphate and for NCR gene activation in response to nitrogen availability, indicating a role for inositol pyrophosphates in these controls. Inositol polyphosphates may be involved in the regulation of chromatin remodeling of transcription. In Schizosaccharomyces pombe (strain 972 / ATCC 24843) (Fission yeast), this protein is Inositol polyphosphate multikinase (arg82).